The sequence spans 107 residues: Mitochondrial pyruvate carrier 1 (107 aa).

A run of 2 helical transmembrane segments spans residues 18–39 (YFMS…AALA) and 52–68 (MTLA…RFAY).

The protein belongs to the mitochondrial pyruvate carrier (MPC) (TC 2.A.105) family. The functional 150 kDa pyruvate import complex is a heteromer of MPC1 and MPC2.

The protein resides in the mitochondrion inner membrane. Mediates the uptake of pyruvate into mitochondria. The sequence is that of Mitochondrial pyruvate carrier 1 (Mpc1) from Drosophila melanogaster (Fruit fly).